A 255-amino-acid chain; its full sequence is uncharacterized protein (255 aa).

An N-terminal signal peptide occupies residues 1-22 (MNILSPIIIIIILIVLFYVMRM).

This is an uncharacterized protein from Acanthamoeba polyphaga (Amoeba).